Consider the following 223-residue polypeptide: MOB-like protein phocein (223 aa).

The segment at 1 to 23 (MTAATENRTVRRNGPGTKRADWN) is disordered. Zn(2+)-binding residues include C92, C97, H169, and H174.

It belongs to the MOB1/phocein family.

Its subcellular location is the cytoplasm. The protein resides in the perinuclear region. The protein localises to the membrane. It localises to the golgi apparatus. It is found in the golgi stack membrane. May play a role in membrane trafficking, specifically in membrane budding reactions. The sequence is that of MOB-like protein phocein from Caenorhabditis elegans.